A 1689-amino-acid chain; its full sequence is MNIAQPVSSEIKSVKFGIYDVDDVEKISVKQIVNPVLLDNLNHPTNGGLYDLALGPYLKNSVCATCHLDERYCPGHFGHIVLPIPAYHPLFFSQMYNLLRSTCLYCHHFKLSKVKVHLFFCRLKLLDYGLLNESEMVENVSLTEAIIKNSNGTPLEDGSDSEDSGLGHDDIAKDAATLMRIRDEFVAKSIADSRQNAHIDAQLTTLLLHERKKVVRAFYHAISSRKQCDNCQSFSPNFRKEGFAKIFEIPLSGKNLQFMEQTGKIRSDVLRDTSKKHHEDEGYDGDSDSSNESEVEGIDLFEEDPNPLKNKSKSPIAHGAKYMTSTEVRNHLRRLFVKENVVLSRLYAHKRGKPASADMFFLQNIAVPPTRFRPASKMGDEVHENIQNELLTRILQSSIQIASLSKDSTVEVNPDEKEGLERRSRAFELLINAFVQLQHDVNSLIDSNRNPSSGGQSRTVPPGIKQILEKKEGLFRKHMMGKRVNYAARSVISPDPNIETNEIGVPPVFATKLTYPEPVTLYNFNEMRNAVINGPHKWPGASHIQNEDGTLISLMPLTIEQRTALANQLLTPQSNLISSPYSYSRLINTNKKVYRHVRNGDMLILNRQPTLHKPSMMAHKARILPGEKTIRMHYANCNSYNADFDGDEMNMHFPQSTNARSEAQFIANTDSQYLVPTSGDPLRGLIQDHVVMGVWLTCKDTFYTRDEYQQLLFQALKPDETGMYGRIKTLPPAIQRPGIYWTGKQIISSVLLNLKPSDRPGLNLKSKAKVPGKYWSPDSEEGSVLFDDGELLCGILDKSSFGASAFGLVHSVHELYGPDIAGRLLSVLSRLFTAYAQMRGFTCRMDDLRLDEQGDNWRRQLLENGKSFGLEAASEYVGLSTDSPIALLNANLEEVYRDDEKLQGLDAAMKGKMNGLTSSIINKCIPDGLLTKFPYNHMQTMTVSGAKGSNVNVSQISCLLGQQELEGRRVPLMVSGKSLPSFVPYETSAKSGGFIASRFLTGIAPQEYYFHCMAGREGLIDTAVKTSRSGYLQRCLMKHLEGLCVQYDHTVRDSDGSIVQFHYGEDSLDVTKQKHLTQFEFSAKNYKSLIQKYKVKSVLSAVDSETASSYAKKALKKPYKYDPVLDKYPPSRYLGSVSEKFQRAVDEYTQKNPDKLIASKKESKLDDSLLNESKFKALMQLRYQQSLVDPGESVGVLASQSIGEPSTQMTLNTFHFAGFGAKNVTLGIPRLREIIMTASANIQTPTMTLRLNDGVSDKRASAFCKEVNKLVLSEVVRQVRVTEKISGQGSDEQSKTYAIRLDLYSRDEYQDEYGVLQEEIESTFSNRFLKILNRIIKSYLAKSKQRKSGGKDDTVPEVGQALKPLEDIDEAPIEGRAQEALEDEDNDATNEKMVSRSKQHASYEGPDEADKVALRQLKGSNKVEDVNMDEEEDEGFKSDESVSDFKERKLLEKQNTVSISERRELQLKTAKEILSNCKHLDFDYVNGEWATVELVFPINTEKLLMVSLVEKACSETVIHEIPGITRCFSKPPDSALDTVPKVITEGVNLKAIWEFYNEISMNDIYTNDIAAILRIYGVEAARNAIVHEVSSVFGVYGIAVDPRHLSLIADYMTFEGGYKAFNRMGIEYNTSPFAKMSFETTCHFLTEAALRGDVDDLSNPSSRLVVGRVGNFGTGSFDIFTPVVDSPAN.

Zn(2+) is bound by residues cysteine 63, cysteine 66, cysteine 73, and histidine 76. Residues serine 159 and serine 161 each carry the phosphoserine modification. The span at 269-280 shows a compositional bias: basic and acidic residues; sequence VLRDTSKKHHED. Residues 269 to 295 form a disordered region; sequence VLRDTSKKHHEDEGYDGDSDSSNESEV. Residues 281 to 295 are compositionally biased toward acidic residues; it reads EGYDGDSDSSNESEV. 3 residues coordinate Mg(2+): aspartate 643, aspartate 645, and aspartate 647. The bridging helix stretch occupies residues 1005-1017; the sequence is PQEYYFHCMAGRE. Residues 1346-1440 form a disordered region; that stretch reads RKSGGKDDTV…EEDEGFKSDE (95 aa). Residues serine 1438 and serine 1441 each carry the phosphoserine modification.

This sequence belongs to the RNA polymerase beta' chain family. As to quaternary structure, component of the RNA polymerase I (Pol I) complex consisting of at least 13 subunits.

The protein localises to the nucleus. It localises to the nucleolus. The enzyme catalyses RNA(n) + a ribonucleoside 5'-triphosphate = RNA(n+1) + diphosphate. DNA-dependent RNA polymerase catalyzes the transcription of DNA into RNA using the four ribonucleoside triphosphates as substrates. Largest and catalytic core component of RNA polymerase I which synthesizes ribosomal RNA precursors. Forms the polymerase active center together with the second largest subunit. A single stranded DNA template strand of the promoter is positioned within the central active site cleft of Pol I. A bridging helix emanates from RPA1 and crosses the cleft near the catalytic site and is thought to promote translocation of Pol I by acting as a ratchet that moves the RNA-DNA hybrid through the active site by switching from straight to bent conformations at each step of nucleotide addition. This Schizosaccharomyces pombe (strain 972 / ATCC 24843) (Fission yeast) protein is DNA-directed RNA polymerase I subunit rpa1 (rpa1).